The chain runs to 354 residues: NADH-quinone oxidoreductase subunit H (354 aa).

8 consecutive transmembrane segments (helical) span residues 16–36 (WLAV…PVMI), 90–110 (YLFI…WAVI), 126–146 (VLYV…SGWA), 170–190 (MGFA…TGIV), 197–217 (IWNW…ISGL), 249–269 (VFFL…AIMF), 290–310 (VPGF…FLWF), and 329–349 (VLIP…YFKV).

The protein belongs to the complex I subunit 1 family. In terms of assembly, NDH-1 is composed of 14 different subunits. Subunits NuoA, H, J, K, L, M, N constitute the membrane sector of the complex.

It localises to the cell inner membrane. The catalysed reaction is a quinone + NADH + 5 H(+)(in) = a quinol + NAD(+) + 4 H(+)(out). Functionally, NDH-1 shuttles electrons from NADH, via FMN and iron-sulfur (Fe-S) centers, to quinones in the respiratory chain. The immediate electron acceptor for the enzyme in this species is believed to be ubiquinone. Couples the redox reaction to proton translocation (for every two electrons transferred, four hydrogen ions are translocated across the cytoplasmic membrane), and thus conserves the redox energy in a proton gradient. This subunit may bind ubiquinone. This is NADH-quinone oxidoreductase subunit H from Hydrogenovibrio crunogenus (strain DSM 25203 / XCL-2) (Thiomicrospira crunogena).